Here is a 359-residue protein sequence, read N- to C-terminus: tRNA/tmRNA (uracil-C(5))-methyltransferase (359 aa).

S-adenosyl-L-methionine-binding residues include Q183, Y211, N216, E232, and D292. C317 acts as the Nucleophile in catalysis. E351 acts as the Proton acceptor in catalysis.

It belongs to the class I-like SAM-binding methyltransferase superfamily. RNA M5U methyltransferase family. TrmA subfamily.

It carries out the reaction uridine(54) in tRNA + S-adenosyl-L-methionine = 5-methyluridine(54) in tRNA + S-adenosyl-L-homocysteine + H(+). The catalysed reaction is uridine(341) in tmRNA + S-adenosyl-L-methionine = 5-methyluridine(341) in tmRNA + S-adenosyl-L-homocysteine + H(+). Functionally, dual-specificity methyltransferase that catalyzes the formation of 5-methyluridine at position 54 (m5U54) in all tRNAs, and that of position 341 (m5U341) in tmRNA (transfer-mRNA). This is tRNA/tmRNA (uracil-C(5))-methyltransferase from Pseudomonas fluorescens (strain Pf0-1).